A 260-amino-acid chain; its full sequence is Pyridoxine 5'-phosphate synthase (260 aa).

3-amino-2-oxopropyl phosphate-binding residues include asparagine 10 and arginine 21. Histidine 46 acts as the Proton acceptor in catalysis. 2 residues coordinate 1-deoxy-D-xylulose 5-phosphate: arginine 48 and histidine 53. Glutamate 76 functions as the Proton acceptor in the catalytic mechanism. 1-deoxy-D-xylulose 5-phosphate is bound at residue threonine 113. Residue histidine 204 is the Proton donor of the active site. Residues aspartate 205 and 227–228 contribute to the 3-amino-2-oxopropyl phosphate site; that span reads GH.

It belongs to the PNP synthase family. Homooctamer; tetramer of dimers.

It is found in the cytoplasm. It catalyses the reaction 3-amino-2-oxopropyl phosphate + 1-deoxy-D-xylulose 5-phosphate = pyridoxine 5'-phosphate + phosphate + 2 H2O + H(+). Its pathway is cofactor biosynthesis; pyridoxine 5'-phosphate biosynthesis; pyridoxine 5'-phosphate from D-erythrose 4-phosphate: step 5/5. Functionally, catalyzes the complicated ring closure reaction between the two acyclic compounds 1-deoxy-D-xylulose-5-phosphate (DXP) and 3-amino-2-oxopropyl phosphate (1-amino-acetone-3-phosphate or AAP) to form pyridoxine 5'-phosphate (PNP) and inorganic phosphate. This Xylella fastidiosa (strain M12) protein is Pyridoxine 5'-phosphate synthase.